The sequence spans 264 residues: Triosephosphate isomerase (264 aa).

Substrate is bound at residue 13–15; the sequence is NWK. Residue H98 is the Electrophile of the active site. The active-site Proton acceptor is E170. Substrate contacts are provided by residues G176, S216, and 237–238; that span reads GG.

It belongs to the triosephosphate isomerase family. Homodimer.

It localises to the cytoplasm. It catalyses the reaction D-glyceraldehyde 3-phosphate = dihydroxyacetone phosphate. The protein operates within carbohydrate biosynthesis; gluconeogenesis. It functions in the pathway carbohydrate degradation; glycolysis; D-glyceraldehyde 3-phosphate from glycerone phosphate: step 1/1. In terms of biological role, involved in the gluconeogenesis. Catalyzes stereospecifically the conversion of dihydroxyacetone phosphate (DHAP) to D-glyceraldehyde-3-phosphate (G3P). The chain is Triosephosphate isomerase from Protochlamydia amoebophila (strain UWE25).